Reading from the N-terminus, the 211-residue chain is Protein-L-isoaspartate O-methyltransferase (211 aa).

Ser-62 is a catalytic residue.

This sequence belongs to the methyltransferase superfamily. L-isoaspartyl/D-aspartyl protein methyltransferase family.

The protein resides in the cytoplasm. It catalyses the reaction [protein]-L-isoaspartate + S-adenosyl-L-methionine = [protein]-L-isoaspartate alpha-methyl ester + S-adenosyl-L-homocysteine. Its function is as follows. Catalyzes the methyl esterification of L-isoaspartyl residues in peptides and proteins that result from spontaneous decomposition of normal L-aspartyl and L-asparaginyl residues. It plays a role in the repair and/or degradation of damaged proteins. The polypeptide is Protein-L-isoaspartate O-methyltransferase (Shewanella piezotolerans (strain WP3 / JCM 13877)).